The chain runs to 274 residues: Putative pyruvate, phosphate dikinase regulatory protein (274 aa).

150 to 157 (GPSRTSKT) contributes to the ADP binding site.

The protein belongs to the pyruvate, phosphate/water dikinase regulatory protein family. PDRP subfamily.

The enzyme catalyses N(tele)-phospho-L-histidyl/L-threonyl-[pyruvate, phosphate dikinase] + ADP = N(tele)-phospho-L-histidyl/O-phospho-L-threonyl-[pyruvate, phosphate dikinase] + AMP + H(+). It carries out the reaction N(tele)-phospho-L-histidyl/O-phospho-L-threonyl-[pyruvate, phosphate dikinase] + phosphate + H(+) = N(tele)-phospho-L-histidyl/L-threonyl-[pyruvate, phosphate dikinase] + diphosphate. Its function is as follows. Bifunctional serine/threonine kinase and phosphorylase involved in the regulation of the pyruvate, phosphate dikinase (PPDK) by catalyzing its phosphorylation/dephosphorylation. The protein is Putative pyruvate, phosphate dikinase regulatory protein of Rickettsia peacockii (strain Rustic).